Here is a 367-residue protein sequence, read N- to C-terminus: AA9 family lytic polysaccharide monooxygenase A (367 aa).

An N-terminal signal peptide occupies residues 1–20 (MKSSTFGMLALAAAAKLVSA). Residue His-21 participates in Cu(2+) binding. The segment at 37 to 56 (GNSESGYIRSPPSNSPITDV) is disordered. A disulfide bond links Cys-63 and Cys-183. Residue His-102 participates in Cu(2+) binding. Position 169 (His-169) interacts with O2. Residue Tyr-180 coordinates Cu(2+). A disordered region spans residues 234 to 287 (GASGSSSSPSASASASAPAATSAAPAPSSFTTIAKQPATSSTEAPSTENTSTTS). Composition is skewed to low complexity over residues 235–262 (ASGS…APSS) and 270–287 (PATS…STTS). Asn-282 carries N-linked (GlcNAc...) asparagine glycosylation. The 37-residue stretch at 329-365 (GAVKEWYQCGGLNYKGSTQCEEGLTCKKWNPYYYQCI) folds into the CBM1 domain.

Belongs to the polysaccharide monooxygenase AA9 family. Cu(2+) is required as a cofactor.

It is found in the secreted. It catalyses the reaction [(1-&gt;4)-beta-D-glucosyl]n+m + reduced acceptor + O2 = 4-dehydro-beta-D-glucosyl-[(1-&gt;4)-beta-D-glucosyl]n-1 + [(1-&gt;4)-beta-D-glucosyl]m + acceptor + H2O.. In terms of biological role, lytic polysaccharide monooxygenase (LPMO) that depolymerizes crystalline and amorphous polysaccharides via the oxidation of scissile alpha- or beta-(1-4)-glycosidic bonds, yielding C4 oxidation products. Catalysis by LPMOs requires the reduction of the active-site copper from Cu(II) to Cu(I) by a reducing agent and H(2)O(2) or O(2) as a cosubstrate. Active on cellulose and cello-oligosaccharides, as well as plant cell wall-derived hemicellulosic polysaccharides. Also active on cello-oligosaccharides such as cellohexaose, cellopentaose or cellotetraose. This chain is AA9 family lytic polysaccharide monooxygenase A, found in Aspergillus oryzae (strain ATCC 42149 / RIB 40) (Yellow koji mold).